The chain runs to 230 residues: Thymidylate kinase (230 aa).

Residue 20–27 (GGEGSGKS) participates in ATP binding.

Belongs to the thymidylate kinase family.

The enzyme catalyses dTMP + ATP = dTDP + ADP. Phosphorylation of dTMP to form dTDP in both de novo and salvage pathways of dTTP synthesis. The protein is Thymidylate kinase of Nitrobacter winogradskyi (strain ATCC 25391 / DSM 10237 / CIP 104748 / NCIMB 11846 / Nb-255).